A 150-amino-acid chain; its full sequence is Infection structure-specific protein 24 (150 aa).

Functionally, involved in the development of infection structures. The germ tube elongates across the leaf surface of the infected plant until it recognizes a stomate. Physical stimuli provided by the stomate induce differentiation of the germ tube to form a series of infection structures involved in host colonization. This chain is Infection structure-specific protein 24 (INF24), found in Uromyces appendiculatus (Rust fungus).